The chain runs to 474 residues: L-arabinose isomerase (474 aa).

Positions 306, 331, 348, and 447 each coordinate Mn(2+).

This sequence belongs to the arabinose isomerase family. Requires Mn(2+) as cofactor.

The enzyme catalyses beta-L-arabinopyranose = L-ribulose. Its pathway is carbohydrate degradation; L-arabinose degradation via L-ribulose; D-xylulose 5-phosphate from L-arabinose (bacterial route): step 1/3. Functionally, catalyzes the conversion of L-arabinose to L-ribulose. This chain is L-arabinose isomerase, found in Pediococcus pentosaceus (strain ATCC 25745 / CCUG 21536 / LMG 10740 / 183-1w).